Consider the following 154-residue polypeptide: Urease accessory protein UreE (154 aa).

It belongs to the UreE family.

The protein resides in the cytoplasm. Functionally, involved in urease metallocenter assembly. Binds nickel. Probably functions as a nickel donor during metallocenter assembly. The chain is Urease accessory protein UreE from Escherichia coli O157:H7.